A 316-amino-acid chain; its full sequence is Adenine deaminase (316 aa).

The Zn(2+) site is built by His-14, His-16, and His-194. The active-site Proton donor is Glu-197. Zn(2+) is bound at residue Asp-275. A substrate-binding site is contributed by Asp-276.

This sequence belongs to the metallo-dependent hydrolases superfamily. Adenosine and AMP deaminases family. Adenine deaminase type 2 subfamily. The cofactor is Zn(2+).

The catalysed reaction is adenine + H2O + H(+) = hypoxanthine + NH4(+). In terms of biological role, catalyzes the hydrolytic deamination of adenine to hypoxanthine. Plays an important role in the purine salvage pathway and in nitrogen catabolism. The sequence is that of Adenine deaminase from Stutzerimonas stutzeri (strain A1501) (Pseudomonas stutzeri).